The primary structure comprises 316 residues: Ribosomal protein L11 methyltransferase (316 aa).

Threonine 157, glycine 178, aspartate 200, and asparagine 243 together coordinate S-adenosyl-L-methionine.

It belongs to the methyltransferase superfamily. PrmA family.

It is found in the cytoplasm. It catalyses the reaction L-lysyl-[protein] + 3 S-adenosyl-L-methionine = N(6),N(6),N(6)-trimethyl-L-lysyl-[protein] + 3 S-adenosyl-L-homocysteine + 3 H(+). Methylates ribosomal protein L11. The protein is Ribosomal protein L11 methyltransferase of Streptococcus pneumoniae (strain ATCC 700669 / Spain 23F-1).